Reading from the N-terminus, the 146-residue chain is Hemoglobin subunit beta (146 aa).

Positions 2 to 146 constitute a Globin domain; it reads HWTAEEKQLI…VAHALARKYH (145 aa). H63 and H92 together coordinate heme b.

This sequence belongs to the globin family. In terms of assembly, heterotetramer of two alpha chains and two beta chains. Red blood cells.

Functionally, involved in oxygen transport from the lung to the various peripheral tissues. The polypeptide is Hemoglobin subunit beta (HBB) (Aegypius monachus (Cinereous vulture)).